The chain runs to 609 residues: Isocitrate dehydrogenase kinase/phosphatase (609 aa).

Residues 325-331 (APGIKGM) and Lys346 contribute to the ATP site. Residue Asp381 is part of the active site.

Belongs to the AceK family.

The protein resides in the cytoplasm. The enzyme catalyses L-seryl-[isocitrate dehydrogenase] + ATP = O-phospho-L-seryl-[isocitrate dehydrogenase] + ADP + H(+). Bifunctional enzyme which can phosphorylate or dephosphorylate isocitrate dehydrogenase (IDH) on a specific serine residue. This is a regulatory mechanism which enables bacteria to bypass the Krebs cycle via the glyoxylate shunt in response to the source of carbon. When bacteria are grown on glucose, IDH is fully active and unphosphorylated, but when grown on acetate or ethanol, the activity of IDH declines drastically concomitant with its phosphorylation. The sequence is that of Isocitrate dehydrogenase kinase/phosphatase from Acidovorax sp. (strain JS42).